Consider the following 736-residue polypeptide: Glycogen [starch] synthase, muscle (736 aa).

Serine 8 bears the Phosphoserine; by AMPK and PKA mark. Residue serine 11 is modified to Phosphoserine. A UDP-binding site is contributed by lysine 39. UDP-alpha-D-glucose is bound by residues histidine 205 and arginine 211. The alpha-D-glucose 6-phosphate site is built by histidine 291, glutamate 292, glutamine 294, histidine 297, and lysine 301. Arginine 331 is a UDP binding site. Arginine 331 serves as a coordination point for UDP-alpha-D-glucose. The residue at position 412 (serine 412) is a Phosphoserine. Position 501 (histidine 501) interacts with alpha-D-glucose 6-phosphate. UDP-alpha-D-glucose-binding residues include glutamate 510, tryptophan 512, and glycine 513. Threonine 515 provides a ligand contact to UDP. Residues arginine 582 and arginine 586 each coordinate alpha-D-glucose 6-phosphate. The tract at residues 631–736 is disordered; it reads TQGYRYPRPA…PASSLGEERN (106 aa). Phosphoserine; by DYRK2, GSK3-alpha, GSK3-beta and PASK is present on serine 641. Serine 645 and serine 649 each carry phosphoserine; by GSK3-alpha and GSK3-beta. A Phosphoserine modification is found at serine 652. Serine 653 carries the phosphoserine; by GSK3-alpha and GSK3-beta modification. Serine 657 is modified (phosphoserine; by CK2). Over residues 658 to 681 the composition is skewed to acidic residues; the sequence is EDEEEPRDLPPDEDDERYDEDEEA. Residues 682–695 are compositionally biased toward basic and acidic residues; sequence AKDRRNIRAPEWPR. Serine 698 is modified (phosphoserine). Threonine 700 carries the post-translational modification Phosphothreonine. Phosphoserine is present on serine 709. Low complexity predominate over residues 714-727; sequence PSSSVSTPSEPLSP. Threonine 720 carries the post-translational modification Phosphothreonine. Phosphoserine is present on residues serine 726 and serine 730.

It belongs to the glycosyltransferase 3 family. In terms of assembly, part of the GYS1-GYG1 complex, a heterooctamer composed of a tetramer of GYS1 and 2 dimers of GYG1, where each GYS1 protomer binds to one GYG1 subunit (via GYG1 C-terminus); the GYS1 tetramer may dissociate from GYG1 dimers to continue glycogen polymerization on its own. Phosphorylation at Ser-8 by AMPK inactivates the enzyme activity. Primed phosphorylation at Ser-657 (site 5) by CSNK2A1 and CSNK2A2 is required for inhibitory phosphorylation at Ser-641 (site 3a), Ser-645 (site 3b), Ser-649 (site 3c) and Ser-653 (site 4) by GSK3A an GSK3B. Phosphorylated at Ser-641 by PASK, leading to inactivation; phosphorylation by PASK is inhibited by glycogen. Phosphorylated at Ser-641 by DYRK2, leading to inactivation. Dephosphorylation at Ser-641 and Ser-645 by PP1 activates the enzyme.

It carries out the reaction [(1-&gt;4)-alpha-D-glucosyl](n) + UDP-alpha-D-glucose = [(1-&gt;4)-alpha-D-glucosyl](n+1) + UDP + H(+). It functions in the pathway glycan biosynthesis; glycogen biosynthesis. With respect to regulation, allosteric activation by glucose-6-phosphate. Phosphorylation reduces the activity towards UDP-glucose. When in the non-phosphorylated state, glycogen synthase does not require glucose-6-phosphate as an allosteric activator; when phosphorylated it does. Its function is as follows. Glycogen synthase participates in the glycogen biosynthetic process along with glycogenin and glycogen branching enzyme. Extends the primer composed of a few glucose units formed by glycogenin by adding new glucose units to it. In this context, glycogen synthase transfers the glycosyl residue from UDP-Glc to the non-reducing end of alpha-1,4-glucan. This Bos taurus (Bovine) protein is Glycogen [starch] synthase, muscle (GYS1).